The following is a 430-amino-acid chain: Small ribosomal subunit protein uS5m (430 aa).

Residues 108–128 (AGARKGRGKRTKRKRRKDLNR) are disordered. Basic residues predominate over residues 111–125 (RKGRGKRTKRKRRKD). The region spanning 218–282 (FDTRILEVRN…NRAVHYLHYI (65 aa)) is the S5 DRBM domain.

It belongs to the universal ribosomal protein uS5 family. As to quaternary structure, component of the mitochondrial ribosome small subunit (28S) which comprises a 12S rRNA and about 30 distinct proteins.

The protein resides in the mitochondrion. This Bos taurus (Bovine) protein is Small ribosomal subunit protein uS5m (MRPS5).